The following is a 547-amino-acid chain: CDK5RAP1-like protein (547 aa).

The MTTase N-terminal domain maps to 79-194 (RTVCYVTYGC…LPRLVAVAAG (116 aa)). [4Fe-4S] cluster contacts are provided by Cys88, Cys124, Cys157, Cys232, Cys236, and Cys239. In terms of domain architecture, Radical SAM core spans 218-475 (DSASKTAFIS…TTVFREEALK (258 aa)). A TRAM domain is found at 478 to 543 (QALIGSEQTV…SQTLKAQLIG (66 aa)).

This sequence belongs to the methylthiotransferase family. MiaB subfamily. Requires [4Fe-4S] cluster as cofactor.

Its function is as follows. Potential regulator of CDK5 activity. The chain is CDK5RAP1-like protein from Caenorhabditis elegans.